The sequence spans 198 residues: NADH-quinone oxidoreductase subunit B (198 aa).

C62, C63, C128, and C158 together coordinate [4Fe-4S] cluster.

This sequence belongs to the complex I 20 kDa subunit family. As to quaternary structure, NDH-1 is composed of 14 different subunits. Subunits NuoB, C, D, E, F, and G constitute the peripheral sector of the complex. It depends on [4Fe-4S] cluster as a cofactor.

The protein resides in the cell inner membrane. The enzyme catalyses a quinone + NADH + 5 H(+)(in) = a quinol + NAD(+) + 4 H(+)(out). Its function is as follows. NDH-1 shuttles electrons from NADH, via FMN and iron-sulfur (Fe-S) centers, to quinones in the respiratory chain. The immediate electron acceptor for the enzyme in this species is believed to be a menaquinone. Couples the redox reaction to proton translocation (for every two electrons transferred, four hydrogen ions are translocated across the cytoplasmic membrane), and thus conserves the redox energy in a proton gradient. The chain is NADH-quinone oxidoreductase subunit B from Phocaeicola vulgatus (strain ATCC 8482 / DSM 1447 / JCM 5826 / CCUG 4940 / NBRC 14291 / NCTC 11154) (Bacteroides vulgatus).